The following is a 479-amino-acid chain: Replication factor C large subunit (479 aa).

Residue 56 to 63 (GPPGVGKT) participates in ATP binding. Positions 435 to 461 (LGEKPLEPQEAKARRRGEKASRDEGRK) are enriched in basic and acidic residues. The segment at 435–479 (LGEKPLEPQEAKARRRGEKASRDEGRKAGKRERKGVGLDFFLGEQ) is disordered.

The protein belongs to the activator 1 small subunits family. RfcL subfamily. Heteromultimer composed of small subunits (RfcS) and large subunits (RfcL).

Its function is as follows. Part of the RFC clamp loader complex which loads the PCNA sliding clamp onto DNA. This Aeropyrum pernix (strain ATCC 700893 / DSM 11879 / JCM 9820 / NBRC 100138 / K1) protein is Replication factor C large subunit.